The primary structure comprises 530 residues: Bifunctional purine biosynthesis protein PurH (530 aa).

The MGS-like domain occupies 1–148 (MNNARPIRRA…KNHKDVTIVV (148 aa)).

The protein belongs to the PurH family.

It carries out the reaction (6R)-10-formyltetrahydrofolate + 5-amino-1-(5-phospho-beta-D-ribosyl)imidazole-4-carboxamide = 5-formamido-1-(5-phospho-D-ribosyl)imidazole-4-carboxamide + (6S)-5,6,7,8-tetrahydrofolate. It catalyses the reaction IMP + H2O = 5-formamido-1-(5-phospho-D-ribosyl)imidazole-4-carboxamide. Its pathway is purine metabolism; IMP biosynthesis via de novo pathway; 5-formamido-1-(5-phospho-D-ribosyl)imidazole-4-carboxamide from 5-amino-1-(5-phospho-D-ribosyl)imidazole-4-carboxamide (10-formyl THF route): step 1/1. It participates in purine metabolism; IMP biosynthesis via de novo pathway; IMP from 5-formamido-1-(5-phospho-D-ribosyl)imidazole-4-carboxamide: step 1/1. The polypeptide is Bifunctional purine biosynthesis protein PurH (Vibrio parahaemolyticus serotype O3:K6 (strain RIMD 2210633)).